The chain runs to 329 residues: Ferredoxin--NADP reductase 2 (329 aa).

FAD is bound by residues Thr-18, Glu-37, Gln-45, Tyr-50, Val-90, Phe-124, Asp-285, and Ser-326.

This sequence belongs to the ferredoxin--NADP reductase type 2 family. In terms of assembly, homodimer. FAD is required as a cofactor.

The catalysed reaction is 2 reduced [2Fe-2S]-[ferredoxin] + NADP(+) + H(+) = 2 oxidized [2Fe-2S]-[ferredoxin] + NADPH. The sequence is that of Ferredoxin--NADP reductase 2 from Bacillus cytotoxicus (strain DSM 22905 / CIP 110041 / 391-98 / NVH 391-98).